Consider the following 78-residue polypeptide: Acyl carrier protein (78 aa).

One can recognise a Carrier domain in the interval 2 to 77 (SNIEDRVRKI…AAIDYVNSAS (76 aa)). Residue Ser37 is modified to O-(pantetheine 4'-phosphoryl)serine.

Belongs to the acyl carrier protein (ACP) family. Post-translationally, 4'-phosphopantetheine is transferred from CoA to a specific serine of apo-ACP by AcpS. This modification is essential for activity because fatty acids are bound in thioester linkage to the sulfhydryl of the prosthetic group.

It is found in the cytoplasm. The protein operates within lipid metabolism; fatty acid biosynthesis. Functionally, carrier of the growing fatty acid chain in fatty acid biosynthesis. The chain is Acyl carrier protein from Photobacterium profundum (strain SS9).